Here is a 161-residue protein sequence, read N- to C-terminus: 2-C-methyl-D-erythritol 2,4-cyclodiphosphate synthase (161 aa).

D10 and H12 together coordinate a divalent metal cation. 4-CDP-2-C-methyl-D-erythritol 2-phosphate is bound by residues 10–12 and 36–37; these read DVH and HS. Residue H44 coordinates a divalent metal cation. Residues 58–60, 63–67, 102–108, 134–137, F141, and R144 each bind 4-CDP-2-C-methyl-D-erythritol 2-phosphate; these read DIG, FPDTD, AQVPKMA, and TTTE.

This sequence belongs to the IspF family. As to quaternary structure, homotrimer. A divalent metal cation serves as cofactor.

It carries out the reaction 4-CDP-2-C-methyl-D-erythritol 2-phosphate = 2-C-methyl-D-erythritol 2,4-cyclic diphosphate + CMP. Its pathway is isoprenoid biosynthesis; isopentenyl diphosphate biosynthesis via DXP pathway; isopentenyl diphosphate from 1-deoxy-D-xylulose 5-phosphate: step 4/6. Its function is as follows. Involved in the biosynthesis of isopentenyl diphosphate (IPP) and dimethylallyl diphosphate (DMAPP), two major building blocks of isoprenoid compounds. Catalyzes the conversion of 4-diphosphocytidyl-2-C-methyl-D-erythritol 2-phosphate (CDP-ME2P) to 2-C-methyl-D-erythritol 2,4-cyclodiphosphate (ME-CPP) with a corresponding release of cytidine 5-monophosphate (CMP). This Shewanella baltica (strain OS223) protein is 2-C-methyl-D-erythritol 2,4-cyclodiphosphate synthase.